Reading from the N-terminus, the 758-residue chain is Translation initiation factor IF-2 (758 aa).

Residues 55–168 (EKNVGKQATQ…KTHQPSIPVK (114 aa)) form a disordered region. Polar residues-rich tracts occupy residues 60 to 78 (KQAT…QQNH) and 86 to 95 (QRQQSATSKP). A compositionally biased stretch (low complexity) spans 96–136 (KVNNQQHSNSSNEKSKNTKGNQNRNMTQNNNNNNNNNNNNR). Residues 259–428 (ERPPVVTIMG…LLVAEVGELK (170 aa)) form the tr-type G domain. Residues 268–275 (GHVDHGKT) are G1. 268-275 (GHVDHGKT) contributes to the GTP binding site. Residues 293-297 (GITQH) are G2. Residues 314–317 (DTPG) form a G3 region. GTP contacts are provided by residues 314–318 (DTPGH) and 368–371 (NKMD). Positions 368–371 (NKMD) are G4. A G5 region spans residues 404-406 (SAL).

It belongs to the TRAFAC class translation factor GTPase superfamily. Classic translation factor GTPase family. IF-2 subfamily.

It localises to the cytoplasm. Its function is as follows. One of the essential components for the initiation of protein synthesis. Protects formylmethionyl-tRNA from spontaneous hydrolysis and promotes its binding to the 30S ribosomal subunits. Also involved in the hydrolysis of GTP during the formation of the 70S ribosomal complex. The sequence is that of Translation initiation factor IF-2 from Lysinibacillus sphaericus (strain C3-41).